The sequence spans 234 residues: Zein-alpha A30 (234 aa).

The first 21 residues, 1-21, serve as a signal peptide directing secretion; that stretch reads MAAKIFCLLMLLGLSASAATA.

This sequence belongs to the zein family.

Functionally, zeins are major seed storage proteins. This is Zein-alpha A30 from Zea mays (Maize).